An 86-amino-acid polypeptide reads, in one-letter code: Dynein light chain 1, cytoplasmic (86 aa).

It belongs to the dynein light chain family. In terms of assembly, homodimer. Cytoplasmic dynein consists of two catalytic heavy chains (HCs) and a number of non-catalytic subunits which present intermediate chains (ICs), light intermediate chains (LICs) and light chains (LCs). Component of the nuclear pore complex (NPC). NPC constitutes the exclusive means of nucleocytoplasmic transport. NPCs allow the passive diffusion of ions and small molecules and the active, nuclear transport receptor-mediated bidirectional transport of macromolecules such as proteins, RNAs, ribonucleoparticles (RNPs), and ribosomal subunits across the nuclear envelope. Due to its 8-fold rotational symmetry, all subunits are present with 8 copies or multiples thereof.

Its subcellular location is the cytoplasm. The protein localises to the cytoskeleton. It localises to the nucleus. It is found in the nuclear pore complex. In terms of biological role, acts as one of several non-catalytic accessory components of the cytoplasmic dynein complex that are thought to be involved in linking dynein to cargos and to adapter proteins that regulate dynein function. Cytoplasmic dynein 1 acts as a motor for the intracellular retrograde motility of vesicles and organelles along microtubules. May play a role in changing or maintaining the spatial distribution of cytoskeletal structures. Also a component of the nuclear pore complex. This chain is Dynein light chain 1, cytoplasmic (DYN2), found in Candida glabrata (strain ATCC 2001 / BCRC 20586 / JCM 3761 / NBRC 0622 / NRRL Y-65 / CBS 138) (Yeast).